We begin with the raw amino-acid sequence, 212 residues long: Actin-depolymerizing factor 1, isoforms a/b (212 aa).

One can recognise an ADF-H domain in the interval 3-159 (SGVMVDPDVQ…SHKELLNNCP (157 aa)).

Belongs to the actin-binding proteins ADF family. As to quaternary structure, interacts with F-actin.

Its function is as follows. Depolymerizes growing actin filaments in muscle cells; required for the assembly of actin filaments into the functional contractile myofilament lattice of muscle. Competes with unc-87 for actin binding and inhibits the actin-bundling activity of unc-87. In Caenorhabditis elegans, this protein is Actin-depolymerizing factor 1, isoforms a/b.